A 174-amino-acid polypeptide reads, in one-letter code: RNA pyrophosphohydrolase (174 aa).

In terms of domain architecture, Nudix hydrolase spans 6 to 150; sequence GFRPNVGIVI…KREVYRRVMK (145 aa). A Nudix box motif is present at residues 38–59; sequence GGVDDGETPEQAMFRELYEEIG.

The protein belongs to the Nudix hydrolase family. RppH subfamily. Requires a divalent metal cation as cofactor.

Accelerates the degradation of transcripts by removing pyrophosphate from the 5'-end of triphosphorylated RNA, leading to a more labile monophosphorylated state that can stimulate subsequent ribonuclease cleavage. The protein is RNA pyrophosphohydrolase of Tolumonas auensis (strain DSM 9187 / NBRC 110442 / TA 4).